A 230-amino-acid chain; its full sequence is RNA chaperone ProQ (230 aa).

A compositionally biased stretch (basic and acidic residues) spans Glu-105–Gly-125. The interval Glu-105–Thr-182 is disordered. A compositionally biased stretch (low complexity) spans Pro-154–Arg-167. Residues Ala-168 to Val-178 show a composition bias toward basic and acidic residues.

This sequence belongs to the ProQ family.

The protein localises to the cytoplasm. RNA chaperone with significant RNA binding, RNA strand exchange and RNA duplexing activities. May regulate ProP activity through an RNA-based, post-transcriptional mechanism. The chain is RNA chaperone ProQ from Erwinia tasmaniensis (strain DSM 17950 / CFBP 7177 / CIP 109463 / NCPPB 4357 / Et1/99).